Reading from the N-terminus, the 509-residue chain is Probable basic-leucine zipper transcription factor H (509 aa).

Positions 1-42 (MMNSPRSLDSSDGSVDSSSVYSGTSSFGSSFTSSTGSGFTNS) are disordered. Residues 10-39 (SSDGSVDSSSVYSGTSSFGSSFTSSTGSGF) show a composition bias toward low complexity. Residues 50–113 (AKKKKIRQMQ…NENYLKINQL (64 aa)) form the bZIP domain. Positions 51–77 (KKKKIRQMQNRQSAAQYRERKKEYLEK) are basic motif. Residues 78 to 99 (LETIVDNLESDRNQLLQQTKQL) form a leucine-zipper region. 4 disordered regions span residues 134–185 (LLSK…SNNG), 223–275 (FSHL…SRFN), 290–414 (IENV…IINN), and 465–509 (SNNN…GIPK). Composition is skewed to low complexity over residues 226–248 (LQQQQQQQPQQQNSPQILQSPIP), 255–269 (PIQQISPSSPNQNIN), 292–350 (NVNN…SNRS), 361–414 (QQQQ…IINN), 465–483 (SNNNNSNNNNSGLENNSPS), and 490–509 (NGGINNISSGNLNSLKGIPK).

The protein belongs to the bZIP family.

It localises to the nucleus. Functionally, probable transcriptional regulator. In Dictyostelium discoideum (Social amoeba), this protein is Probable basic-leucine zipper transcription factor H (bzpH).